Reading from the N-terminus, the 474-residue chain is Probable glycine dehydrogenase (decarboxylating) subunit 2 (474 aa).

N6-(pyridoxal phosphate)lysine is present on K266.

Belongs to the GcvP family. C-terminal subunit subfamily. In terms of assembly, the glycine cleavage system is composed of four proteins: P, T, L and H. In this organism, the P 'protein' is a heterodimer of two subunits. The cofactor is pyridoxal 5'-phosphate.

The catalysed reaction is N(6)-[(R)-lipoyl]-L-lysyl-[glycine-cleavage complex H protein] + glycine + H(+) = N(6)-[(R)-S(8)-aminomethyldihydrolipoyl]-L-lysyl-[glycine-cleavage complex H protein] + CO2. Its function is as follows. The glycine cleavage system catalyzes the degradation of glycine. The P protein binds the alpha-amino group of glycine through its pyridoxal phosphate cofactor; CO(2) is released and the remaining methylamine moiety is then transferred to the lipoamide cofactor of the H protein. The sequence is that of Probable glycine dehydrogenase (decarboxylating) subunit 2 from Thermus thermophilus (strain ATCC 27634 / DSM 579 / HB8).